Here is a 356-residue protein sequence, read N- to C-terminus: GDP-mannose 4,6 dehydratase (356 aa).

NADP(+) is bound by residues 12 to 17 (GITGQD), 69 to 70 (DL), 91 to 95 (LGAQS), and Tyr-106. The active site involves Thr-138. Residues Glu-140 and Tyr-162 each act as nucleophile in the active site. NADP(+) contacts are provided by Lys-166, His-192, and Arg-197.

It belongs to the NAD(P)-dependent epimerase/dehydratase family. GDP-mannose 4,6-dehydratase subfamily. It depends on NADP(+) as a cofactor.

It catalyses the reaction GDP-alpha-D-mannose = GDP-4-dehydro-alpha-D-rhamnose + H2O. The protein operates within nucleotide-sugar biosynthesis; GDP-L-fucose biosynthesis via de novo pathway; GDP-L-fucose from GDP-alpha-D-mannose: step 1/2. Its function is as follows. Participates in the synthesis of GDP-L-fucose, catalyzing the conversion of GDP-D-mannose to GDP-4-dehydro-6-deoxy-D-mannose (GDP-4-dehydro-alpha-D-rhamnose) which is further catalyzed by GDP-L-fucose synthase (ger). GDP-L-fucose is important for the synthesis of fucosylated N-glycans which are expressed on the cell surface. The sequence is that of GDP-mannose 4,6 dehydratase (gmd) from Dictyostelium discoideum (Social amoeba).